Here is a 448-residue protein sequence, read N- to C-terminus: Probable glycine dehydrogenase (decarboxylating) subunit 1 (448 aa).

This sequence belongs to the GcvP family. N-terminal subunit subfamily. As to quaternary structure, the glycine cleavage system is composed of four proteins: P, T, L and H. In this organism, the P 'protein' is a heterodimer of two subunits.

It catalyses the reaction N(6)-[(R)-lipoyl]-L-lysyl-[glycine-cleavage complex H protein] + glycine + H(+) = N(6)-[(R)-S(8)-aminomethyldihydrolipoyl]-L-lysyl-[glycine-cleavage complex H protein] + CO2. Its function is as follows. The glycine cleavage system catalyzes the degradation of glycine. The P protein binds the alpha-amino group of glycine through its pyridoxal phosphate cofactor; CO(2) is released and the remaining methylamine moiety is then transferred to the lipoamide cofactor of the H protein. In Lysinibacillus sphaericus (strain C3-41), this protein is Probable glycine dehydrogenase (decarboxylating) subunit 1.